The following is a 302-amino-acid chain: Sulfate adenylyltransferase subunit 2 (302 aa).

This sequence belongs to the PAPS reductase family. CysD subfamily. As to quaternary structure, heterodimer composed of CysD, the smaller subunit, and CysN.

The catalysed reaction is sulfate + ATP + H(+) = adenosine 5'-phosphosulfate + diphosphate. It functions in the pathway sulfur metabolism; hydrogen sulfide biosynthesis; sulfite from sulfate: step 1/3. Its function is as follows. With CysN forms the ATP sulfurylase (ATPS) that catalyzes the adenylation of sulfate producing adenosine 5'-phosphosulfate (APS) and diphosphate, the first enzymatic step in sulfur assimilation pathway. APS synthesis involves the formation of a high-energy phosphoric-sulfuric acid anhydride bond driven by GTP hydrolysis by CysN coupled to ATP hydrolysis by CysD. In Yersinia pestis bv. Antiqua (strain Nepal516), this protein is Sulfate adenylyltransferase subunit 2.